A 218-amino-acid polypeptide reads, in one-letter code: Phosphoenolpyruvate guanylyltransferase (218 aa).

The phosphoenolpyruvate site is built by threonine 151, glycine 166, and serine 169.

It belongs to the CofC family.

The catalysed reaction is phosphoenolpyruvate + GTP + H(+) = enolpyruvoyl-2-diphospho-5'-guanosine + diphosphate. It functions in the pathway cofactor biosynthesis; coenzyme F420 biosynthesis. In terms of biological role, guanylyltransferase that catalyzes the activation of phosphoenolpyruvate (PEP) as enolpyruvoyl-2-diphospho-5'-guanosine, via the condensation of PEP with GTP. It is involved in the biosynthesis of coenzyme F420, a hydride carrier cofactor. The polypeptide is Phosphoenolpyruvate guanylyltransferase (Mycobacterium sp. (strain KMS)).